We begin with the raw amino-acid sequence, 102 residues long: Small ribosomal subunit protein uS10 (102 aa).

Positions 34–58 (LSGPVPLPTKTLEIPARKSPDGEGT) are disordered.

Belongs to the universal ribosomal protein uS10 family. As to quaternary structure, part of the 30S ribosomal subunit.

In terms of biological role, involved in the binding of tRNA to the ribosomes. This is Small ribosomal subunit protein uS10 from Natronomonas pharaonis (strain ATCC 35678 / DSM 2160 / CIP 103997 / JCM 8858 / NBRC 14720 / NCIMB 2260 / Gabara) (Halobacterium pharaonis).